A 308-amino-acid polypeptide reads, in one-letter code: Methionyl-tRNA formyltransferase (308 aa).

(6S)-5,6,7,8-tetrahydrofolate is bound at residue 110–113; sequence SLLP.

Belongs to the Fmt family.

The enzyme catalyses L-methionyl-tRNA(fMet) + (6R)-10-formyltetrahydrofolate = N-formyl-L-methionyl-tRNA(fMet) + (6S)-5,6,7,8-tetrahydrofolate + H(+). Attaches a formyl group to the free amino group of methionyl-tRNA(fMet). The formyl group appears to play a dual role in the initiator identity of N-formylmethionyl-tRNA by promoting its recognition by IF2 and preventing the misappropriation of this tRNA by the elongation apparatus. This chain is Methionyl-tRNA formyltransferase, found in Mycobacterium sp. (strain KMS).